The chain runs to 294 residues: Glutamyl-Q tRNA(Asp) synthetase (294 aa).

Residues arginine 7–serine 11 and glutamate 43 contribute to the L-glutamate site. The 'HIGH' region motif lies at proline 10 to serine 20. Cysteine 99, cysteine 101, tyrosine 113, and cysteine 117 together coordinate Zn(2+). L-glutamate is bound by residues tyrosine 168 and arginine 186. Positions lysine 224–glutamine 228 match the 'KMSKS' region motif. Lysine 227 lines the ATP pocket.

The protein belongs to the class-I aminoacyl-tRNA synthetase family. GluQ subfamily. Zn(2+) serves as cofactor.

Its function is as follows. Catalyzes the tRNA-independent activation of glutamate in presence of ATP and the subsequent transfer of glutamate onto a tRNA(Asp). Glutamate is transferred on the 2-amino-5-(4,5-dihydroxy-2-cyclopenten-1-yl) moiety of the queuosine in the wobble position of the QUC anticodon. This Vibrio parahaemolyticus serotype O3:K6 (strain RIMD 2210633) protein is Glutamyl-Q tRNA(Asp) synthetase.